A 586-amino-acid polypeptide reads, in one-letter code: Exocyst complex component EXO70A3 (586 aa).

Residues asparagine 65 and asparagine 106 are each glycosylated (N-linked (GlcNAc...) asparagine). A disordered region spans residues cysteine 119–aspartate 149. Residues phenylalanine 258–isoleucine 278 form a helical membrane-spanning segment. Asparagine 321 and asparagine 487 each carry an N-linked (GlcNAc...) asparagine glycan.

The protein belongs to the EXO70 family. Subunit of the exocyst complex. Confined to the outer layer of the columella cells in the root tips of young seedlings.

The protein localises to the membrane. In terms of biological role, component of the exocyst complex involved in the docking of exocytic vesicles with fusion sites on the plasma membrane during regulated or polarized secretion. Involved in PIN4 exocytosis and gravitropic responses in columella cells. By monitoring PIN4 distribution in columella cells, modulates auxin repartition and subsequently regulates the root system architecture (RSA), thus being a component of the auxin-dependent root directional growth (ARD). This is Exocyst complex component EXO70A3 from Arabidopsis thaliana (Mouse-ear cress).